The chain runs to 465 residues: Ribosomal oxygenase 2 (465 aa).

Residues 139–271 (QPQRFKDELW…NSWGDFLLDT (133 aa)) enclose the JmjC domain. Positions 179, 181, and 240 each coordinate Fe cation. Ser309 bears the Phosphoserine mark.

The protein belongs to the ROX family. MINA53 subfamily. Requires Fe(2+) as cofactor. In terms of tissue distribution, expressed in liver, skeletal muscle, heart, pancreas, and placenta. Not detected in brain, lung or kidney. Expressed in several lung cancer tissues, but is barely detected in the adjacent non-cancerous tissues. Also highly expressed in several esophageal squamous cell carcinoma (ESCC), and colon cancer tissues, and in various cancer cell lines.

The protein resides in the nucleus. It localises to the nucleolus. It carries out the reaction L-histidyl-[protein] + 2-oxoglutarate + O2 = (3S)-3-hydroxy-L-histidyl-[protein] + succinate + CO2. It catalyses the reaction L-histidyl-[ribosomal protein uL15] + 2-oxoglutarate + O2 = (3S)-3-hydroxy-L-histidyl-[ribosomal protein uL15] + succinate + CO2. Oxygenase that can act as both a histone lysine demethylase and a ribosomal histidine hydroxylase. Is involved in the demethylation of trimethylated 'Lys-9' on histone H3 (H3K9me3), leading to an increase in ribosomal RNA expression. Also catalyzes the hydroxylation of 60S ribosomal protein L27a on 'His-39'. May play an important role in cell growth and survival. May be involved in ribosome biogenesis, most likely during the assembly process of pre-ribosomal particles. The sequence is that of Ribosomal oxygenase 2 from Homo sapiens (Human).